Here is a 377-residue protein sequence, read N- to C-terminus: Chaperone protein DnaJ (377 aa).

The J domain maps to 5–70; it reads DYYEVLGVGR…NKKAAYDQFG (66 aa). Residues 133 to 211 form a CR-type zinc finger; that stretch reads GLTKELRIPT…CHGDGRVEKT (79 aa). Residues Cys-146, Cys-149, Cys-163, Cys-166, Cys-185, Cys-188, Cys-199, and Cys-202 each coordinate Zn(2+). CXXCXGXG motif repeat units lie at residues 146-153, 163-170, 185-192, and 199-206; these read CDVCDGSG, CGTCHGQG, CPTCHGRG, and CSKCHGDG.

The protein belongs to the DnaJ family. As to quaternary structure, homodimer. Zn(2+) serves as cofactor.

It localises to the cytoplasm. Its function is as follows. Participates actively in the response to hyperosmotic and heat shock by preventing the aggregation of stress-denatured proteins and by disaggregating proteins, also in an autonomous, DnaK-independent fashion. Unfolded proteins bind initially to DnaJ; upon interaction with the DnaJ-bound protein, DnaK hydrolyzes its bound ATP, resulting in the formation of a stable complex. GrpE releases ADP from DnaK; ATP binding to DnaK triggers the release of the substrate protein, thus completing the reaction cycle. Several rounds of ATP-dependent interactions between DnaJ, DnaK and GrpE are required for fully efficient folding. Also involved, together with DnaK and GrpE, in the DNA replication of plasmids through activation of initiation proteins. The sequence is that of Chaperone protein DnaJ from Shewanella sp. (strain ANA-3).